The following is a 656-amino-acid chain: UV-damage endonuclease (656 aa).

7 disordered regions span residues 1–82 (MPSR…GKEQ), 119–146 (PSVV…KEPV), 175–194 (IIEP…RPPA), 241–264 (PLQF…EPQD), 492–515 (EPCD…TLPP), 550–620 (DMVP…GPYN), and 636–656 (KREV…EFDG). Positions 13-32 (TPQSESSTFSSTLDSSAPSP) are enriched in low complexity. 2 stretches are compositionally biased toward basic and acidic residues: residues 48 to 82 (SEKD…GKEQ) and 135 to 146 (TNAEEREAKEPV). A compositionally biased stretch (basic and acidic residues) spans 550 to 561 (DMVPYDRDDENR). Over residues 568 to 579 (APKKKKGGKRKR) the composition is skewed to basic residues. The span at 583-595 (EEAAEPEEVDTAA) shows a compositional bias: acidic residues. The span at 596-614 (DDVKDAPEGPKEVPEEERA) shows a compositional bias: basic and acidic residues. The span at 647-656 (EVEDEGEFDG) shows a compositional bias: acidic residues.

The protein belongs to the uve1/UvsE family. Mg(2+) serves as cofactor.

Its function is as follows. Endonuclease for the repair of UV-irradiated DNA. Involved in the excision of cyclobutane pyrimidine dimers (CPD) and 6-4 pyrimidine pyrimidones (6-4PP) which forms the UV damage repair (UVDR) pathway. This is UV-damage endonuclease (mus-18) from Neurospora crassa (strain ATCC 24698 / 74-OR23-1A / CBS 708.71 / DSM 1257 / FGSC 987).